The following is a 499-amino-acid chain: Argininosuccinate lyase (499 aa).

Residues 1 to 22 (MSDGEDHETANADDRDETVVRR) are disordered. Residues 7 to 22 (HETANADDRDETVVRR) are compositionally biased toward basic and acidic residues.

Belongs to the lyase 1 family. Argininosuccinate lyase subfamily.

It localises to the cytoplasm. It catalyses the reaction 2-(N(omega)-L-arginino)succinate = fumarate + L-arginine. Its pathway is amino-acid biosynthesis; L-arginine biosynthesis; L-arginine from L-ornithine and carbamoyl phosphate: step 3/3. The polypeptide is Argininosuccinate lyase (Haloarcula marismortui (strain ATCC 43049 / DSM 3752 / JCM 8966 / VKM B-1809) (Halobacterium marismortui)).